The primary structure comprises 86 residues: Small ribosomal subunit protein uS15 (86 aa).

Belongs to the universal ribosomal protein uS15 family. As to quaternary structure, part of the 30S ribosomal subunit. Forms a bridge to the 50S subunit in the 70S ribosome, contacting the 23S rRNA.

Its function is as follows. One of the primary rRNA binding proteins, it binds directly to 16S rRNA where it helps nucleate assembly of the platform of the 30S subunit by binding and bridging several RNA helices of the 16S rRNA. Functionally, forms an intersubunit bridge (bridge B4) with the 23S rRNA of the 50S subunit in the ribosome. This chain is Small ribosomal subunit protein uS15, found in Endomicrobium trichonymphae.